We begin with the raw amino-acid sequence, 149 residues long: MFRGITTLNLDAKGRLSIPAKYRKSLGICCDGKVIITVDLLEPCLQLYPLPEWEIVERKLVALPSHNRQARYIKRRLIGHAEECELDGHGRILLPLELRSRTELGKNISLVGQGNKFELWDSMVWERQMAKEEASAKEELTRELALLAL.

SpoVT-AbrB domains lie at 5–52 and 81–124; these read ITTL…PLPE and AEEC…DSMV.

Belongs to the MraZ family. As to quaternary structure, forms oligomers.

The protein resides in the cytoplasm. It is found in the nucleoid. The sequence is that of Transcriptional regulator MraZ from Nitrosococcus oceani (strain ATCC 19707 / BCRC 17464 / JCM 30415 / NCIMB 11848 / C-107).